Here is a 383-residue protein sequence, read N- to C-terminus: Homoserine O-succinyltransferase (383 aa).

An AB hydrolase-1 domain is found at 51–361; that stretch reads NALLICHALS…ESDFGHDAFL (311 aa). Ser-157 (nucleophile) is an active-site residue. Arg-227 is a substrate binding site. Active-site residues include Asp-324 and His-357. Asp-358 is a substrate binding site.

It belongs to the AB hydrolase superfamily. MetX family. Homodimer.

Its subcellular location is the cytoplasm. The catalysed reaction is L-homoserine + succinyl-CoA = O-succinyl-L-homoserine + CoA. The protein operates within amino-acid biosynthesis; L-methionine biosynthesis via de novo pathway; O-succinyl-L-homoserine from L-homoserine: step 1/1. Its function is as follows. Transfers a succinyl group from succinyl-CoA to L-homoserine, forming succinyl-L-homoserine. The chain is Homoserine O-succinyltransferase from Teredinibacter turnerae (strain ATCC 39867 / T7901).